Here is a 360-residue protein sequence, read N- to C-terminus: GDP-mannose transporter (360 aa).

The Cytoplasmic segment spans residues 1–49 (MSSSETKGRNEEDVAEIKKAIATGAVKDPSNLSAIPPIFVVSGANFSMN). The chain crosses the membrane as a helical span at residues 50-67 (FLLLCIQSSVCCACVFAV). Topologically, residues 68 to 84 (KKLGIISFRDFDMKDAK) are lumenal. A helical membrane pass occupies residues 85–105 (MWFPISFLLVSVIYTGSKSLQ). Residues 106-110 (YLSIP) lie on the Cytoplasmic side of the membrane. The helical transmembrane segment at 111–131 (VYTIFKNLTIILIAYGEVLWF) threads the bilayer. Residues 132–134 (GGR) lie on the Lumenal side of the membrane. Residues 135–155 (VTALTFVSFIFMVISSIIAAW) form a helical membrane-spanning segment. Residues 156 to 164 (SDVQSALAS) are Cytoplasmic-facing. Residues 165–185 (SIPGASSGVSVGAMQSLFGAL) form a helical membrane-spanning segment. Position 186 (R186) is a topological domain, lumenal. Residues 187-207 (GLNVGYFWMLVNCLTSAAYVL) traverse the membrane as a helical segment. Residues 208-220 (SMRKRIKSTGFSD) lie on the Cytoplasmic side of the membrane. The chain crosses the membrane as a helical span at residues 221–241 (WDTMFYNNLLSIPVLAVFSLI). Residues 242–260 (AEDWGRENLNRNFPAETRN) are Lumenal-facing. A helical transmembrane segment spans residues 261–281 (FLLFAIAFSGAAAVGISYTTA). Topologically, residues 282–291 (WCVRVTSSTT) are cytoplasmic. Residues 292–312 (YSMVGALNKLPVAASGMLFFG) traverse the membrane as a helical segment. Residues 313–314 (DP) are Lumenal-facing. Residues 315–335 (VTVGSVSAVGVGFFAGIVYAV) form a helical membrane-spanning segment. At 336 to 360 (AKNNQKKNERRQAADAIIPMASRKP) the chain is on the cytoplasmic side.

This sequence belongs to the TPT transporter family. SLC35D subfamily. In terms of assembly, homooligomer.

It is found in the golgi apparatus membrane. The protein resides in the cytoplasmic vesicle membrane. Its subcellular location is the endoplasmic reticulum membrane. Involved in the import of GDP-mannose from the cytoplasm into the Golgi lumen. The sequence is that of GDP-mannose transporter (VRG4) from Coprinopsis cinerea (strain Okayama-7 / 130 / ATCC MYA-4618 / FGSC 9003) (Inky cap fungus).